We begin with the raw amino-acid sequence, 343 residues long: Uroporphyrinogen decarboxylase (343 aa).

Substrate contacts are provided by residues 24–28 (RQAGR), Phe43, Asp74, Tyr151, Ser206, and His321.

It belongs to the uroporphyrinogen decarboxylase family. Homodimer.

Its subcellular location is the cytoplasm. The catalysed reaction is uroporphyrinogen III + 4 H(+) = coproporphyrinogen III + 4 CO2. It participates in porphyrin-containing compound metabolism; protoporphyrin-IX biosynthesis; coproporphyrinogen-III from 5-aminolevulinate: step 4/4. Functionally, catalyzes the decarboxylation of four acetate groups of uroporphyrinogen-III to yield coproporphyrinogen-III. This is Uroporphyrinogen decarboxylase from Thermosynechococcus vestitus (strain NIES-2133 / IAM M-273 / BP-1).